The sequence spans 508 residues: Light-independent protochlorophyllide reductase subunit B (508 aa).

Asp36 contributes to the [4Fe-4S] cluster binding site. Asp282 acts as the Proton donor in catalysis. 417–418 lines the substrate pocket; that stretch reads GL.

It belongs to the ChlB/BchB/BchZ family. As to quaternary structure, protochlorophyllide reductase is composed of three subunits; BchL, BchN and BchB. Forms a heterotetramer of two BchB and two BchN subunits. Requires [4Fe-4S] cluster as cofactor.

It carries out the reaction chlorophyllide a + oxidized 2[4Fe-4S]-[ferredoxin] + 2 ADP + 2 phosphate = protochlorophyllide a + reduced 2[4Fe-4S]-[ferredoxin] + 2 ATP + 2 H2O. It functions in the pathway porphyrin-containing compound metabolism; bacteriochlorophyll biosynthesis (light-independent). Its function is as follows. Component of the dark-operative protochlorophyllide reductase (DPOR) that uses Mg-ATP and reduced ferredoxin to reduce ring D of protochlorophyllide (Pchlide) to form chlorophyllide a (Chlide). This reaction is light-independent. The NB-protein (BchN-BchB) is the catalytic component of the complex. This is Light-independent protochlorophyllide reductase subunit B from Methylocella silvestris (strain DSM 15510 / CIP 108128 / LMG 27833 / NCIMB 13906 / BL2).